The following is a 122-amino-acid chain: Large ribosomal subunit protein uL14 (122 aa).

It belongs to the universal ribosomal protein uL14 family. In terms of assembly, part of the 50S ribosomal subunit. Forms a cluster with proteins L3 and L19. In the 70S ribosome, L14 and L19 interact and together make contacts with the 16S rRNA in bridges B5 and B8.

Functionally, binds to 23S rRNA. Forms part of two intersubunit bridges in the 70S ribosome. The chain is Large ribosomal subunit protein uL14 from Picosynechococcus sp. (strain ATCC 27264 / PCC 7002 / PR-6) (Agmenellum quadruplicatum).